A 558-amino-acid polypeptide reads, in one-letter code: Armadillo repeat-containing X-linked protein 5 (558 aa).

Composition is skewed to basic and acidic residues over residues 1–14 and 139–156; these read MVDSGTEARARGKA and KSHDKANTGSRPDRREET. Disordered regions lie at residues 1-35 and 139-165; these read MVDSGTEARARGKAEAGLQDGISGPATARVNGKTQ and KSHDKANTGSRPDRREETSIGMKSSDE. The ARM 1 repeat unit spans residues 300 to 339; sequence CKSRGFSLEPKEFDKLVALLKLTKDPFIHEIATMIMGISP. The interval 369–388 is disordered; it reads HPGALSMVDDSSESSEEPKS. ARM repeat units lie at residues 422-461, 463-503, and 520-558; these read IKFEDHYVITSYIPDFLTLLNKGSVKTKFYVLKVFSCLSK, HANT…NINF, and SELISIFQEAKQFGQKLQDLAEHSDPEVRDKVIRLILKL.

It belongs to the eutherian X-chromosome-specific Armcx family.

The sequence is that of Armadillo repeat-containing X-linked protein 5 (ARMCX5) from Homo sapiens (Human).